A 122-amino-acid polypeptide reads, in one-letter code: Ribonuclease P protein component (122 aa).

This sequence belongs to the RnpA family. In terms of assembly, consists of a catalytic RNA component (M1 or rnpB) and a protein subunit.

It catalyses the reaction Endonucleolytic cleavage of RNA, removing 5'-extranucleotides from tRNA precursor.. Its function is as follows. RNaseP catalyzes the removal of the 5'-leader sequence from pre-tRNA to produce the mature 5'-terminus. It can also cleave other RNA substrates such as 4.5S RNA. The protein component plays an auxiliary but essential role in vivo by binding to the 5'-leader sequence and broadening the substrate specificity of the ribozyme. In Synechococcus elongatus (strain ATCC 33912 / PCC 7942 / FACHB-805) (Anacystis nidulans R2), this protein is Ribonuclease P protein component.